The chain runs to 362 residues: Patr class I histocompatibility antigen, A-5 alpha chain (362 aa).

The N-terminal stretch at 1 to 24 is a signal peptide; that stretch reads MQVTAPRTVLLLLSAALALTETWA. The alpha-1 stretch occupies residues 25–114; that stretch reads GSHSMKYFYT…LRGYYNQSEA (90 aa). The Extracellular portion of the chain corresponds to 25-308; sequence GSHSMKYFYT…EPSSQSTIPI (284 aa). Residue N110 is glycosylated (N-linked (GlcNAc...) asparagine). Positions 115–206 are alpha-2; the sequence is GSHIIQRMYG…ENGKETLQRA (92 aa). Cystine bridges form between C125–C188 and C227–C283. The segment at 207-298 is alpha-3; the sequence is DPPKTHVTHH…GLPKPLTLRW (92 aa). Residues 209-295 form the Ig-like C1-type domain; it reads PKTHVTHHPI…QHEGLPKPLT (87 aa). The segment at 299–308 is connecting peptide; that stretch reads EPSSQSTIPI. A helical membrane pass occupies residues 309-332; sequence VGIVAGLAVLAVVVIGAVVAAVMC. Residues 333–362 lie on the Cytoplasmic side of the membrane; sequence RRKSSGGKGGSYSQAASSDSAQGSDVSLTA. The tract at residues 336–362 is disordered; that stretch reads SSGGKGGSYSQAASSDSAQGSDVSLTA. S343 is subject to Phosphoserine. Residues 343–362 are compositionally biased toward low complexity; the sequence is SYSQAASSDSAQGSDVSLTA. Y344 is subject to Phosphotyrosine. 6 positions are modified to phosphoserine: S345, S349, S350, S352, S356, and S359.

The protein belongs to the MHC class I family. As to quaternary structure, heterodimer of an alpha chain and a beta chain (beta-2-microglobulin).

It is found in the membrane. Involved in the presentation of foreign antigens to the immune system. This chain is Patr class I histocompatibility antigen, A-5 alpha chain, found in Pan troglodytes (Chimpanzee).